Here is a 115-residue protein sequence, read N- to C-terminus: NADH-ubiquinone oxidoreductase chain 3 (115 aa).

Helical transmembrane passes span 3-23 (FMLT…IAFW), 55-75 (FFLV…LLPL), and 84-104 (LEVM…SLAY).

This sequence belongs to the complex I subunit 3 family. Core subunit of respiratory chain NADH dehydrogenase (Complex I) which is composed of 45 different subunits. Interacts with TMEM186. Interacts with TMEM242.

The protein resides in the mitochondrion inner membrane. The catalysed reaction is a ubiquinone + NADH + 5 H(+)(in) = a ubiquinol + NAD(+) + 4 H(+)(out). In terms of biological role, core subunit of the mitochondrial membrane respiratory chain NADH dehydrogenase (Complex I) which catalyzes electron transfer from NADH through the respiratory chain, using ubiquinone as an electron acceptor. Essential for the catalytic activity of complex I. This chain is NADH-ubiquinone oxidoreductase chain 3, found in Rhinolophus pumilus (Horseshoe bat).